A 194-amino-acid polypeptide reads, in one-letter code: Probable proteasome subunit beta type-4 (194 aa).

It belongs to the peptidase T1B family. In terms of assembly, the 26S proteasome consists of a 20S proteasome core and two 19S regulatory subunits. The 20S proteasome core is composed of 28 subunits that are arranged in four stacked rings, resulting in a barrel-shaped structure. The two end rings are each formed by seven alpha subunits, and the two central rings are each formed by seven beta subunits. The catalytic chamber with the active sites is on the inside of the barrel.

Its subcellular location is the cytoplasm. It localises to the nucleus. Non-catalytic component of the proteasome, a multicatalytic proteinase complex which is characterized by its ability to cleave peptides with Arg, Phe, Tyr, Leu, and Glu adjacent to the leaving group at neutral or slightly basic pH. The proteasome has an ATP-dependent proteolytic activity. This Meyerozyma guilliermondii (strain ATCC 6260 / CBS 566 / DSM 6381 / JCM 1539 / NBRC 10279 / NRRL Y-324) (Yeast) protein is Probable proteasome subunit beta type-4 (PRO2).